Consider the following 375-residue polypeptide: Tryptophan--tRNA ligase (375 aa).

Residues 81–89 (PSGPVHIGH) carry the 'HIGH' region motif. The 'KMSKS' region motif lies at 258–262 (KMSAS).

It belongs to the class-I aminoacyl-tRNA synthetase family.

It localises to the cytoplasm. The enzyme catalyses tRNA(Trp) + L-tryptophan + ATP = L-tryptophyl-tRNA(Trp) + AMP + diphosphate + H(+). The sequence is that of Tryptophan--tRNA ligase from Pyrobaculum aerophilum (strain ATCC 51768 / DSM 7523 / JCM 9630 / CIP 104966 / NBRC 100827 / IM2).